The chain runs to 778 residues: MAKKQDRKRKVKDEATNDGASGSDQSDNAEEEEDLLQTVKEPGEDSTDDEGIDQEYQSDSSEDLEFESDEEGNYVGRKGGQQESSDEEEVDEEEEDDDDDDDEEEGGKVEDKPTTSSKAETNNEVAPLPALPARDPSKQEYEDSDTSDEEDIRNTVGNIPMHWYDEYKHIGYDWDGNKIIKPIKGDQIDDFLRKIEDPDFWRTVKDPQTGQEVVLSDADIALIKRINSARIPNAEHEEYEPWIEWFTSEVEKMPIKNVPDHKRSFLPSVSEKKRVSRMVHALKMGWMKTTEEVEREKQQKRGPKFYMLWETDTGREQMRRIHDPVSAPKRDLPGHAESYNPPPEYLFDEKETKQWLKLKDEPHKRKLHFMPQKFKSLREVPAYSRYLRERFLRCLDLYLCPRAKRVKLNIDAEYLIPKLPSPRDLQPFPTVESLVYRGHTDLVRSVSVEPKGEYMVSGSDDKTVKIWEIATGRCIRTIETEDVVRCVAWCPNAKLSIIAVATGSRLLLVNPKVGDKLLIKKTDDLLAEEPSNQDIIDNERIKTAVQWSTAEAAEQEKGVRVIINHFKPIRQVTWHGRGDYLATVMPEGANRSALIHQLSKRRSQIPFSKSKGLIQCVLFHPVKPCFFVATQHNIRIYDLVKQELIKKLLTNSKWISGMSIHPKGDNLLVSTYDKKMLWFDLDLSTKPYQTMRLHRNAVRSVAFHLRYPLFASGSDDQAVIVSHGMVYNDLLQNPLIVPLKKLQTHEKRDDFGVLDVCWHPVQPWVFSTGADCTIRLYT.

The span at 1–10 (MAKKQDRKRK) shows a compositional bias: basic residues. Positions 1-152 (MAKKQDRKRK…DSDTSDEEDI (152 aa)) are disordered. Acidic residues-rich tracts occupy residues 44–53 (EDSTDDEGID), 60–72 (SSED…DEEG), and 84–105 (SSDE…DEEE). Positions 114 to 124 (TTSSKAETNNE) are enriched in polar residues. A compositionally biased stretch (acidic residues) spans 142–151 (EDSDTSDEED). WD repeat units follow at residues 438–479 (GHTD…RTIE), 481–519 (EDVV…KLLI), 564–606 (NHFK…SQIP), 609–647 (KSKG…LIKK), 650–689 (TNSK…KPYQ), 693–732 (LHRN…DLLQ), and 748–778 (RDDF…RLYT).

It belongs to the WD repeat BOP1/ERB1 family.

It is found in the nucleus. The protein localises to the nucleolus. Its subcellular location is the nucleoplasm. Required for maturation of ribosomal RNAs and formation of the large ribosomal subunit. The polypeptide is Ribosome biogenesis protein BOP1 homolog (Drosophila willistoni (Fruit fly)).